Here is a 197-residue protein sequence, read N- to C-terminus: UPF0200 protein MJ1399 (197 aa).

Residue 8 to 15 participates in ATP binding; sequence GMPGAGKS.

This sequence belongs to the UPF0200 family.

In Methanocaldococcus jannaschii (strain ATCC 43067 / DSM 2661 / JAL-1 / JCM 10045 / NBRC 100440) (Methanococcus jannaschii), this protein is UPF0200 protein MJ1399.